The primary structure comprises 431 residues: Histidinol dehydrogenase (431 aa).

NAD(+) contacts are provided by Tyr127, Gln190, and Asn213. Ser238, Gln260, and His263 together coordinate substrate. Gln260 and His263 together coordinate Zn(2+). Active-site proton acceptor residues include Glu329 and His330. Positions 330, 363, 417, and 422 each coordinate substrate. Zn(2+) is bound at residue Asp363. His422 contributes to the Zn(2+) binding site.

It belongs to the histidinol dehydrogenase family. The cofactor is Zn(2+).

It carries out the reaction L-histidinol + 2 NAD(+) + H2O = L-histidine + 2 NADH + 3 H(+). Its pathway is amino-acid biosynthesis; L-histidine biosynthesis; L-histidine from 5-phospho-alpha-D-ribose 1-diphosphate: step 9/9. Functionally, catalyzes the sequential NAD-dependent oxidations of L-histidinol to L-histidinaldehyde and then to L-histidine. In Methanopyrus kandleri (strain AV19 / DSM 6324 / JCM 9639 / NBRC 100938), this protein is Histidinol dehydrogenase.